The following is a 479-amino-acid chain: Membrane-bound lytic murein transglycosylase F (479 aa).

Positions 1–18 are cleaved as a signal peptide; sequence MKGLFIRIVLAICLSLWA. The segment at 19 to 266 is non-LT domain; it reads IDMVFPWQQI…RIEEKYFNHL (248 aa). Positions 267–479 are LT domain; sequence NQFDYVDTRS…ISTQTQQEQR (213 aa). E311 is an active-site residue.

It in the N-terminal section; belongs to the bacterial solute-binding protein 3 family. In the C-terminal section; belongs to the transglycosylase Slt family.

The protein resides in the cell outer membrane. It carries out the reaction Exolytic cleavage of the (1-&gt;4)-beta-glycosidic linkage between N-acetylmuramic acid (MurNAc) and N-acetylglucosamine (GlcNAc) residues in peptidoglycan, from either the reducing or the non-reducing ends of the peptidoglycan chains, with concomitant formation of a 1,6-anhydrobond in the MurNAc residue.. In terms of biological role, murein-degrading enzyme that degrades murein glycan strands and insoluble, high-molecular weight murein sacculi, with the concomitant formation of a 1,6-anhydromuramoyl product. Lytic transglycosylases (LTs) play an integral role in the metabolism of the peptidoglycan (PG) sacculus. Their lytic action creates space within the PG sacculus to allow for its expansion as well as for the insertion of various structures such as secretion systems and flagella. In Histophilus somni (strain 2336) (Haemophilus somnus), this protein is Membrane-bound lytic murein transglycosylase F.